Reading from the N-terminus, the 440-residue chain is Probable exopolygalacturonase C (440 aa).

The first 21 residues, 1–21 (MLITNPALLGILASLVPLALG), serve as a signal peptide directing secretion. Asparagine 84 and asparagine 151 each carry an N-linked (GlcNAc...) asparagine glycan. 3 PbH1 repeats span residues 188-210 (GDDI…PFNT), 217-238 (GTNI…AVNT), and 240-261 (SHNI…SIGS). N-linked (GlcNAc...) asparagine glycosylation is present at asparagine 219. Aspartate 231 serves as the catalytic Proton donor. Histidine 255 is an active-site residue. A glycan (N-linked (GlcNAc...) asparagine) is linked at asparagine 271. The PbH1 4 repeat unit spans residues 272-293 (ITNLRFEDVTVIDALYAARFKS). A glycan (N-linked (GlcNAc...) asparagine) is linked at asparagine 313. Cysteine 389 and cysteine 395 form a disulfide bridge. Asparagine 434 is a glycosylation site (N-linked (GlcNAc...) asparagine).

It belongs to the glycosyl hydrolase 28 family.

It is found in the secreted. It catalyses the reaction [(1-&gt;4)-alpha-D-galacturonosyl](n) + H2O = alpha-D-galacturonate + [(1-&gt;4)-alpha-D-galacturonosyl](n-1). In terms of biological role, specific in hydrolyzing the terminal glycosidic bond of polygalacturonic acid and oligogalacturonates. In Aspergillus fumigatus (strain CBS 144.89 / FGSC A1163 / CEA10) (Neosartorya fumigata), this protein is Probable exopolygalacturonase C (pgxC).